A 412-amino-acid chain; its full sequence is MTSIPLGPPQPPSLAPQPPHLHGGDSLKRRPDIDNDKEMSAAVIEGNDAVTGHIISTTIGGKNGEPKQTISYMAERVVGTGSFGIVFQAKCLETGESVAIKKVLQDRRYKNRELQLMRLMDHPNVVSLKHCFFSTTTRDELFLNLVMEYVPETLYRVLKHYTSSNQRMPIFYVKLYTYQIFRGLAYIHTAPGVCHRDVKPQNLLVDPLTHQCKLCDFGSAKVLVKGEANISYICSRYYRAPELIFGATEYTSSIDIWSAGCVLAELLLGQPLFPGENSVDQLVEIIKVLGTPTREEIRCMNPNYTDFRFPQIKAHPWHKVFHKRMPPEAIDLASRLLQYSPSLRCTALEACAHPFFNELREPNARLPNGRPLPPLFNFKQELSGASPELINRLIPEHVRRQMNGGFPFQAGP.

The span at 1-19 shows a compositional bias: pro residues; sequence MTSIPLGPPQPPSLAPQPP. Positions 1–33 are disordered; that stretch reads MTSIPLGPPQPPSLAPQPPHLHGGDSLKRRPDI. Residues 22–33 are compositionally biased toward basic and acidic residues; the sequence is HGGDSLKRRPDI. Phosphoserine is present on Ser-26. In terms of domain architecture, Protein kinase spans 72–356; the sequence is YMAERVVGTG…ALEACAHPFF (285 aa). ATP contacts are provided by residues 78–86 and Lys-101; that span reads VGTGSFGIV. A Phosphoserine modification is found at Ser-127. A phosphothreonine mark is found at Thr-136 and Thr-137. Asp-197 (proton acceptor) is an active-site residue. Phosphoserine is present on Ser-219. Tyr-232 carries the phosphotyrosine modification. Residue Ser-252 is modified to Phosphoserine. A Phosphothreonine modification is found at Thr-293. A Phosphoserine modification is found at Ser-342. Position 346 is a phosphothreonine (Thr-346).

It belongs to the protein kinase superfamily. CMGC Ser/Thr protein kinase family. GSK-3 subfamily. As to quaternary structure, binds to KIB1. Interacts with beet curly top virus AL4/C4 and tomato golden mosaic virus AL4/AC4. In terms of processing, autophosphorylated mainly on threonine and serine residues.

The enzyme catalyses L-seryl-[protein] + ATP = O-phospho-L-seryl-[protein] + ADP + H(+). The catalysed reaction is L-threonyl-[protein] + ATP = O-phospho-L-threonyl-[protein] + ADP + H(+). Functionally, may mediate extracellular signals to regulate transcription in differentiating cells. In Arabidopsis thaliana (Mouse-ear cress), this protein is Shaggy-related protein kinase zeta (ASK6).